Reading from the N-terminus, the 278-residue chain is Large ribosomal subunit protein uL2 (278 aa).

Positions 223 to 278 (RGSAMNPNDHPHGGGEGKAPVGRKAPMTPWGKKALGVKTRNKKKASTKLIVRRRTK) are disordered. Residues 261–278 (TRNKKKASTKLIVRRRTK) show a composition bias toward basic residues.

This sequence belongs to the universal ribosomal protein uL2 family. As to quaternary structure, part of the 50S ribosomal subunit. Forms a bridge to the 30S subunit in the 70S ribosome.

Its function is as follows. One of the primary rRNA binding proteins. Required for association of the 30S and 50S subunits to form the 70S ribosome, for tRNA binding and peptide bond formation. It has been suggested to have peptidyltransferase activity; this is somewhat controversial. Makes several contacts with the 16S rRNA in the 70S ribosome. The sequence is that of Large ribosomal subunit protein uL2 from Spiroplasma kunkelii.